The sequence spans 89 residues: MATIQIIIEEDNVTINVKKNQVPPIEVSPKIPPIEIENVKKNVLCPICLIAKVNTVLECTHVLCSNCVKKINVCPICRKTFQSINFFRL.

Residues 45-78 (CPICLIAKVNTVLECTHVLCSNCVKKINVCPICR) form an RING-type zinc finger.

This is Putative RING finger protein 121R from Invertebrate iridescent virus 6 (IIV-6).